Reading from the N-terminus, the 467-residue chain is Cytochrome c-552 (467 aa).

The first 27 residues, 1–27 (MVKKLTGKSFALSALVAASFVAAGAMA), serve as a signal peptide directing secretion. Position 87 (H87) interacts with heme c. Positions 115, 118, and 119 each coordinate heme. 6 residues coordinate heme c: C153, C156, H157, C195, C198, and H199. Ca(2+) contacts are provided by E201, Y202, K250, and Q252. Residue Y202 coordinates substrate. Residue H253 coordinates substrate. H264, C271, C274, H275, H290, C303, C306, H307, and H382 together coordinate heme c.

Belongs to the cytochrome c-552 family. Ca(2+) is required as a cofactor. It depends on heme c as a cofactor.

Its subcellular location is the periplasm. It catalyses the reaction 6 Fe(III)-[cytochrome c] + NH4(+) + 2 H2O = 6 Fe(II)-[cytochrome c] + nitrite + 8 H(+). It participates in nitrogen metabolism; nitrate reduction (assimilation). In terms of biological role, catalyzes the reduction of nitrite to ammonia, consuming six electrons in the process. This chain is Cytochrome c-552, found in Shewanella amazonensis (strain ATCC BAA-1098 / SB2B).